A 381-amino-acid polypeptide reads, in one-letter code: Subtilisin J (381 aa).

The N-terminal stretch at 1 to 29 (MRSKKLWISLLFALTLIFTMAFSNMSVQA) is a signal peptide. The propeptide occupies 30–106 (AGKSSTEKKY…VEEDHIAHEY (77 aa)). The Inhibitor I9 domain occupies 38-103 (KYIVGFKQTM…VAYVEEDHIA (66 aa)). Position 108 (Gln-108) interacts with Ca(2+). The Peptidase S8 domain occupies 111–380 (PYGISQIKAP…KGLINVQAAA (270 aa)). Catalysis depends on Asp-138, which acts as the Charge relay system. Position 147 (Asp-147) interacts with Ca(2+). Catalysis depends on His-170, which acts as the Charge relay system. Ca(2+) contacts are provided by Leu-181, Asn-183, Ile-185, Val-187, Ala-275, Tyr-277, and Thr-280. Ser-327 functions as the Charge relay system in the catalytic mechanism.

This sequence belongs to the peptidase S8 family. Ca(2+) is required as a cofactor.

It localises to the secreted. The enzyme catalyses Hydrolysis of proteins with broad specificity for peptide bonds, and a preference for a large uncharged residue in P1. Hydrolyzes peptide amides.. Functionally, subtilisin is an extracellular alkaline serine protease, it catalyzes the hydrolysis of proteins and peptide amides. This Geobacillus stearothermophilus (Bacillus stearothermophilus) protein is Subtilisin J (aprJ).